A 122-amino-acid chain; its full sequence is Large ribosomal subunit protein uL14c (122 aa).

This sequence belongs to the universal ribosomal protein uL14 family. As to quaternary structure, part of the 50S ribosomal subunit.

Its subcellular location is the plastid. The protein resides in the chloroplast. Its function is as follows. Binds to 23S rRNA. In Chara vulgaris (Common stonewort), this protein is Large ribosomal subunit protein uL14c.